Here is a 131-residue protein sequence, read N- to C-terminus: Hydrogenase maturation factor HypA (131 aa).

His-2 is a Ni(2+) binding site. 4 residues coordinate Zn(2+): Cys-73, Cys-76, Cys-105, and Cys-108.

Belongs to the HypA/HybF family.

In terms of biological role, involved in the maturation of [NiFe] hydrogenases. Required for nickel insertion into the metal center of the hydrogenase. The protein is Hydrogenase maturation factor HypA of Thermomicrobium roseum (strain ATCC 27502 / DSM 5159 / P-2).